The sequence spans 99 residues: Protein E7 (99 aa).

Residues 1 to 37 (MKGQSMILKDLAAELEEVVSPINLDCEEEIETEEVDC) are E7 terminal domain. The LXCXE motif; interaction with host RB1 and TMEM173/STING signature appears at 24–28 (LDCEE). The segment at 47–84 (CHVCEQVLRLAVVASPDGILQLQQLLLTDSLSFLCTSC) is a zinc-finger region. The short motif at 65–73 (ILQLQQLLL) is the Nuclear export signal element.

Belongs to the papillomaviridae E7 protein family. In terms of assembly, homodimer. Homooligomer. Interacts with host RB1; this interaction induces dissociation of RB1-E2F1 complex thereby disrupting RB1 activity. Interacts with host EP300; this interaction represses EP300 transcriptional activity. Interacts with protein E2; this interaction inhibits E7 oncogenic activity. Interacts with host TMEM173/STING; this interaction impairs the ability of TMEM173/STING to sense cytosolic DNA and promote the production of type I interferon (IFN-alpha and IFN-beta). Post-translationally, highly phosphorylated.

It is found in the host cytoplasm. The protein localises to the host nucleus. Functionally, plays a role in viral genome replication by driving entry of quiescent cells into the cell cycle. Stimulation of progression from G1 to S phase allows the virus to efficiently use the cellular DNA replicating machinery to achieve viral genome replication. E7 protein has both transforming and trans-activating activities. Induces the disassembly of the E2F1 transcription factor from RB1, with subsequent transcriptional activation of E2F1-regulated S-phase genes. Interferes with host histone deacetylation mediated by HDAC1 and HDAC2, leading to transcription activation. Also plays a role in the inhibition of both antiviral and antiproliferative functions of host interferon alpha. Interaction with host TMEM173/STING impairs the ability of TMEM173/STING to sense cytosolic DNA and promote the production of type I interferon (IFN-alpha and IFN-beta). The protein is Protein E7 of Bos taurus papillomavirus 6 (Bovine papillomavirus 6).